The chain runs to 303 residues: MQKFDTRTFQGLILTLQDYWARQGCTIVQPLDMEVGAGTSHPMTCLRELGPEPMAAAYVQPSRRPTDGRYGENPNRLQHYYQFQVVIKPSPDNIQELYLGSLKELGMDPTIHDIRFVEDNWENPTLGAWGLGWEVWLNGMEVTQFTYFQQVGGLECKPVTGEITYGLERLAMYIQGVDSVYDLVWSDGPLGKTTYGDVFHQNEVEQSTYNFEYADVDFLFTCFEQYEKEAQQLLALENPLPLPAYERILKAAHSFNLLDARKAISVTERQRYILRIRTLTKAVAEAYYASREALGFPMCNKDK.

Belongs to the class-II aminoacyl-tRNA synthetase family. In terms of assembly, tetramer of two alpha and two beta subunits.

Its subcellular location is the cytoplasm. The catalysed reaction is tRNA(Gly) + glycine + ATP = glycyl-tRNA(Gly) + AMP + diphosphate. In Escherichia coli (strain K12), this protein is Glycine--tRNA ligase alpha subunit (glyQ).